The chain runs to 462 residues: L-seryl-tRNA(Sec) selenium transferase (462 aa).

Lysine 292 is subject to N6-(pyridoxal phosphate)lysine.

Belongs to the SelA family. It depends on pyridoxal 5'-phosphate as a cofactor.

The protein localises to the cytoplasm. The enzyme catalyses L-seryl-tRNA(Sec) + selenophosphate + H(+) = L-selenocysteinyl-tRNA(Sec) + phosphate. It participates in aminoacyl-tRNA biosynthesis; selenocysteinyl-tRNA(Sec) biosynthesis; selenocysteinyl-tRNA(Sec) from L-seryl-tRNA(Sec) (bacterial route): step 1/1. Its function is as follows. Converts seryl-tRNA(Sec) to selenocysteinyl-tRNA(Sec) required for selenoprotein biosynthesis. The sequence is that of L-seryl-tRNA(Sec) selenium transferase from Geotalea daltonii (strain DSM 22248 / JCM 15807 / FRC-32) (Geobacter daltonii).